A 361-amino-acid chain; its full sequence is Probable cysteine protease RD19B (361 aa).

The N-terminal stretch at 1 to 24 is a signal peptide; sequence MDYHLRVLFSVSLIFVFVSVSVCG. Residues 25 to 131 constitute a propeptide, activation peptide; the sequence is DEDVLIRQVV…NQAPILPTQN (107 aa). 2 disulfide bridges follow: Cys-153–Cys-203 and Cys-187–Cys-237. Cys-156 is a catalytic residue. Asn-250 carries an N-linked (GlcNAc...) asparagine glycan. A disulfide bridge links Cys-293 with Cys-347. Active-site residues include His-299 and Asn-326.

Belongs to the peptidase C1 family.

The protein localises to the lytic vacuole. Probable thiol protease. This chain is Probable cysteine protease RD19B, found in Arabidopsis thaliana (Mouse-ear cress).